An 88-amino-acid polypeptide reads, in one-letter code: MSEQIDRYVSFKNIDCNARAGQMMDALQPYIQAAENPFWAYFQQKRAEFNAKGYDDLRVLHNYLPTLKELIEDDELLAQLEDLEYTCM.

This sequence belongs to the CowN family.

In terms of biological role, is required to sustain N(2)-dependent growth in the presence of low levels of carbon monoxide (CO). Probably acts by protecting the N(2) fixation ability of the nitrogenase complex, which is inactivated in the presence of CO. The protein is N(2)-fixation sustaining protein CowN of Rhodomicrobium vannielii (strain ATCC 17100 / DSM 162 / LMG 4299 / NCIMB 10020 / ATH 3.1.1).